Here is a 242-residue protein sequence, read N- to C-terminus: MRLGVNVDHVATVRQARRTFEPSPVFAALIAQQAGADQITLHLREDRRHIQDRDLELIKELITIPVNLEMAPTEEMREIALRVKPDRITLVPERREEITTEGGLDVVSLKEKLKEYLKPIKEAGIEVSLFIEAQKEQIDASVEVGADAIEIHTGRYANLWNEHRFEEAKEELNRIKEAAIYAKEKGLKVYAGHGLTYHNVKDFVRELKGYVEELNIGHSIVANAVIFGFERAVKEMLNLIKT.

Asparagine 6 contacts 3-amino-2-oxopropyl phosphate. 8-9 (DH) is a 1-deoxy-D-xylulose 5-phosphate binding site. 3-amino-2-oxopropyl phosphate is bound at residue arginine 17. Histidine 42 (proton acceptor) is an active-site residue. Residues arginine 44 and histidine 49 each contribute to the 1-deoxy-D-xylulose 5-phosphate site. The active-site Proton acceptor is the glutamate 69. Threonine 99 is a binding site for 1-deoxy-D-xylulose 5-phosphate. The active-site Proton donor is histidine 193. 3-amino-2-oxopropyl phosphate contacts are provided by residues glycine 194 and 217 to 218 (GH).

This sequence belongs to the PNP synthase family. In terms of assembly, homooctamer; tetramer of dimers.

The protein localises to the cytoplasm. The catalysed reaction is 3-amino-2-oxopropyl phosphate + 1-deoxy-D-xylulose 5-phosphate = pyridoxine 5'-phosphate + phosphate + 2 H2O + H(+). It functions in the pathway cofactor biosynthesis; pyridoxine 5'-phosphate biosynthesis; pyridoxine 5'-phosphate from D-erythrose 4-phosphate: step 5/5. Catalyzes the complicated ring closure reaction between the two acyclic compounds 1-deoxy-D-xylulose-5-phosphate (DXP) and 3-amino-2-oxopropyl phosphate (1-amino-acetone-3-phosphate or AAP) to form pyridoxine 5'-phosphate (PNP) and inorganic phosphate. The chain is Pyridoxine 5'-phosphate synthase from Aquifex aeolicus (strain VF5).